The primary structure comprises 452 residues: Phosphoglucosamine mutase 2 (452 aa).

Ser101 (phosphoserine intermediate) is an active-site residue. Residues Ser101, Asp245, Asp247, and Asp249 each coordinate Mg(2+). Ser101 bears the Phosphoserine mark.

This sequence belongs to the phosphohexose mutase family. The cofactor is Mg(2+). Activated by phosphorylation.

The enzyme catalyses alpha-D-glucosamine 1-phosphate = D-glucosamine 6-phosphate. Its function is as follows. Catalyzes the conversion of glucosamine-6-phosphate to glucosamine-1-phosphate. This is Phosphoglucosamine mutase 2 from Shewanella amazonensis (strain ATCC BAA-1098 / SB2B).